Consider the following 188-residue polypeptide: MTASPCAFPVQFRQPSVSGLSQITSSLYISSGVAANNRLMLSSNRISTVINVSVEVVNALYEDIHYVQVPVADTPTSRLCDFFDPIADHIHSVEMKQGRTLLHCAAGVSRSAALCLAYLMKYHAMSLLDAHTWTKSCRPIIRPNNGFWEQLIHYEFQLFGRNTVHMVSSPVGMIPDIYEKEVRQMIPL.

The 142-residue stretch at 19-160 folds into the Tyrosine-protein phosphatase domain; it reads GLSQITSSLY…LIHYEFQLFG (142 aa). The interval 95–141 is sufficient for mitochondrial localization; the sequence is MKQGRTLLHCAAGVSRSAALCLAYLMKYHAMSLLDAHTWTKSCRPII. The active-site Phosphocysteine intermediate is Cys104.

It belongs to the protein-tyrosine phosphatase family. Non-receptor class dual specificity subfamily.

The protein localises to the cytoplasm. The protein resides in the nucleus. Its subcellular location is the mitochondrion inner membrane. The catalysed reaction is O-phospho-L-tyrosyl-[protein] + H2O = L-tyrosyl-[protein] + phosphate. It catalyses the reaction O-phospho-L-seryl-[protein] + H2O = L-seryl-[protein] + phosphate. The enzyme catalyses O-phospho-L-threonyl-[protein] + H2O = L-threonyl-[protein] + phosphate. Can dephosphorylate single and diphosphorylated synthetic MAPK peptides, with preference for the phosphotyrosine and diphosphorylated forms over phosphothreonine. In vitro, dephosphorylates p-nitrophenyl phosphate (pNPP). The sequence is that of Dual specificity protein phosphatase 18 (DUSP18) from Bos taurus (Bovine).